We begin with the raw amino-acid sequence, 102 residues long: Feather keratin (102 aa).

N-acetylserine is present on Ser-1.

This sequence belongs to the avian keratin family. As to quaternary structure, the avian keratins (F-ker, S-ker, C-ker and B-ker) are a complex mixture of very similar polypeptides.

The sequence is that of Feather keratin from Dromaius novaehollandiae (Emu).